Consider the following 232-residue polypeptide: Urease accessory protein UreF (232 aa).

Belongs to the UreF family. UreD, UreF and UreG form a complex that acts as a GTP-hydrolysis-dependent molecular chaperone, activating the urease apoprotein by helping to assemble the nickel containing metallocenter of UreC. The UreE protein probably delivers the nickel.

It is found in the cytoplasm. In terms of biological role, required for maturation of urease via the functional incorporation of the urease nickel metallocenter. In Trichodesmium erythraeum (strain IMS101), this protein is Urease accessory protein UreF.